A 464-amino-acid polypeptide reads, in one-letter code: Sugar transporter ERD6-like 1 (464 aa).

Transmembrane regions (helical) follow at residues 23–43, 72–92, 95–115, 125–145, 156–176, 180–200, 263–283, 298–318, 326–346, 359–379, 399–419, and 424–444; these read ITCG…VYGC, VMTL…AVIG, QTMW…AFAH, GFLG…IAEI, FSNQ…GNFF, TLAL…FFIP, LIIG…AISA, IGTS…MFAV, LLMS…LSYY, PILI…LGGL, LVTV…NFMM, and FGTY…VWTL.

The protein belongs to the major facilitator superfamily. Sugar transporter (TC 2.A.1.1) family.

The protein resides in the membrane. Its function is as follows. Sugar transporter. In Arabidopsis thaliana (Mouse-ear cress), this protein is Sugar transporter ERD6-like 1 (SUGTL4).